The primary structure comprises 393 residues: Interleukin-1 receptor type 2 (393 aa).

Positions 1 to 13 are cleaved as a signal peptide; it reads MFRLYVLVMGVSA. Residues 14-347 lie on the Extracellular side of the membrane; sequence FTLQPAAHTG…RTTVKEPPPT (334 aa). Disulfide bonds link cysteine 28–cysteine 116, cysteine 50–cysteine 108, and cysteine 152–cysteine 207. Ig-like C2-type domains lie at 29 to 120, 134 to 221, and 237 to 342; these read PVRG…DKVS, PFIS…YNIT, and PVII…TTVK. Residues asparagine 66, asparagine 72, and asparagine 112 are each glycosylated (N-linked (GlcNAc...) asparagine). Asparagine 219 and asparagine 277 each carry an N-linked (GlcNAc...) asparagine glycan. Cysteine 258 and cysteine 326 form a disulfide bridge. A helical transmembrane segment spans residues 348-368; the sequence is FSWGIVLAPLALAFLVLGGIW. The Cytoplasmic segment spans residues 369–393; sequence MHRRCKHRTGKADGLTVLRPHHQDF.

The protein belongs to the interleukin-1 receptor family. As to quaternary structure, forms a non-signaling receptor complex consisting of IL1R2 and IL1RAP. Post-translationally, a soluble form (sIL1R2) can also be produced by proteolytic cleavage at the cell surface (shedding) involving a metalloproteinase.

It localises to the secreted. Its subcellular location is the cell membrane. In terms of biological role, non-signaling receptor for IL1A, IL1B and IL1RN. Reduces IL1B activities. Serves as a decoy receptor by competitive binding to IL1B and preventing its binding to IL1R1. Also modulates cellular response through non-signaling association with IL1RAP after binding to IL1B. IL1R2 (membrane and secreted forms) preferentially binds IL1B and poorly IL1A and IL1RN. The secreted IL1R2 recruits secreted IL1RAP with high affinity; this complex formation may be the dominant mechanism for neutralization of IL1B by secreted/soluble receptors. The chain is Interleukin-1 receptor type 2 (IL1R2) from Chlorocebus aethiops (Green monkey).